A 384-amino-acid chain; its full sequence is S-adenosylmethionine synthase (384 aa).

An ATP-binding site is contributed by His-15. A Mg(2+)-binding site is contributed by Asp-17. Position 43 (Glu-43) interacts with K(+). Glu-56 and Gln-99 together coordinate L-methionine. The interval 99–109 is flexible loop; the sequence is QSPDINQGVDR. Residues 164-166, 230-231, Asp-239, 245-246, Ala-262, and Lys-266 each bind ATP; these read DAK, RF, and RK. L-methionine is bound at residue Asp-239. An L-methionine-binding site is contributed by Lys-270.

The protein belongs to the AdoMet synthase family. As to quaternary structure, homotetramer; dimer of dimers. Requires Mg(2+) as cofactor. It depends on K(+) as a cofactor.

The protein localises to the cytoplasm. It carries out the reaction L-methionine + ATP + H2O = S-adenosyl-L-methionine + phosphate + diphosphate. It functions in the pathway amino-acid biosynthesis; S-adenosyl-L-methionine biosynthesis; S-adenosyl-L-methionine from L-methionine: step 1/1. In terms of biological role, catalyzes the formation of S-adenosylmethionine (AdoMet) from methionine and ATP. The overall synthetic reaction is composed of two sequential steps, AdoMet formation and the subsequent tripolyphosphate hydrolysis which occurs prior to release of AdoMet from the enzyme. The protein is S-adenosylmethionine synthase of Serratia proteamaculans (strain 568).